The primary structure comprises 106 residues: ATP-dependent Clp protease adapter protein ClpS (106 aa).

It belongs to the ClpS family. Binds to the N-terminal domain of the chaperone ClpA.

Involved in the modulation of the specificity of the ClpAP-mediated ATP-dependent protein degradation. This chain is ATP-dependent Clp protease adapter protein ClpS, found in Cronobacter sakazakii (strain ATCC BAA-894) (Enterobacter sakazakii).